The primary structure comprises 263 residues: Shikimate dehydrogenase (NADP(+)) (263 aa).

Residues serine 16–serine 18 and threonine 65 contribute to the shikimate site. Residue lysine 69 is the Proton acceptor of the active site. Shikimate-binding residues include asparagine 90 and aspartate 105. Residues glycine 125–serine 129 and leucine 208 each bind NADP(+). Tyrosine 210 lines the shikimate pocket. An NADP(+)-binding site is contributed by glycine 230.

The protein belongs to the shikimate dehydrogenase family. Homodimer.

It catalyses the reaction shikimate + NADP(+) = 3-dehydroshikimate + NADPH + H(+). It functions in the pathway metabolic intermediate biosynthesis; chorismate biosynthesis; chorismate from D-erythrose 4-phosphate and phosphoenolpyruvate: step 4/7. Its function is as follows. Involved in the biosynthesis of the chorismate, which leads to the biosynthesis of aromatic amino acids. Catalyzes the reversible NADPH linked reduction of 3-dehydroshikimate (DHSA) to yield shikimate (SA). This Helicobacter pylori (strain G27) protein is Shikimate dehydrogenase (NADP(+)).